Consider the following 475-residue polypeptide: Ribulose bisphosphate carboxylase large chain (475 aa).

The propeptide occupies 1-2; the sequence is MS. Position 3 is an N-acetylproline (P3). K14 bears the N6,N6,N6-trimethyllysine mark. Residues N123 and T173 each coordinate substrate. K175 functions as the Proton acceptor in the catalytic mechanism. K177 is a binding site for substrate. Residues K201, D203, and E204 each contribute to the Mg(2+) site. An N6-carboxylysine modification is found at K201. The active-site Proton acceptor is H294. Residues R295, H327, and S379 each coordinate substrate.

It belongs to the RuBisCO large chain family. Type I subfamily. Heterohexadecamer of 8 large chains and 8 small chains. Mg(2+) serves as cofactor.

Its subcellular location is the plastid. It carries out the reaction 2 (2R)-3-phosphoglycerate + 2 H(+) = D-ribulose 1,5-bisphosphate + CO2 + H2O. It catalyses the reaction D-ribulose 1,5-bisphosphate + O2 = 2-phosphoglycolate + (2R)-3-phosphoglycerate + 2 H(+). Its function is as follows. RuBisCO catalyzes two reactions: the carboxylation of D-ribulose 1,5-bisphosphate, the primary event in carbon dioxide fixation, as well as the oxidative fragmentation of the pentose substrate in the photorespiration process. Both reactions occur simultaneously and in competition at the same active site. The chain is Ribulose bisphosphate carboxylase large chain from Aneura mirabilis (Parasitic liverwort).